We begin with the raw amino-acid sequence, 517 residues long: Ribonuclease Y (517 aa).

Residues 1-21 (MIEVLIGLGAGVVGVGAGYLY) form a helical membrane-spanning segment. The region spanning 207–273 (LINVVNIKND…TRVIELLVED (67 aa)) is the KH domain. In terms of domain architecture, HD spans 333 to 426 (ALAHSLEVAH…VCAADALSAA (94 aa)).

The protein belongs to the RNase Y family.

It localises to the cell membrane. In terms of biological role, endoribonuclease that initiates mRNA decay. The sequence is that of Ribonuclease Y from Campylobacter concisus (strain 13826).